We begin with the raw amino-acid sequence, 303 residues long: 2-(5''-triphosphoribosyl)-3'-dephosphocoenzyme-A synthase (303 aa).

The protein belongs to the CitG/MdcB family.

The catalysed reaction is 3'-dephospho-CoA + ATP = 2'-(5''-triphospho-alpha-D-ribosyl)-3'-dephospho-CoA + adenine. Catalyzes the formation of 2-(5''-triphosphoribosyl)-3'-dephosphocoenzyme-A, the precursor of the prosthetic group of the holo-acyl carrier protein (gamma chain) of citrate lyase, from ATP and dephospho-CoA. This Escherichia fergusonii (strain ATCC 35469 / DSM 13698 / CCUG 18766 / IAM 14443 / JCM 21226 / LMG 7866 / NBRC 102419 / NCTC 12128 / CDC 0568-73) protein is 2-(5''-triphosphoribosyl)-3'-dephosphocoenzyme-A synthase.